Reading from the N-terminus, the 579-residue chain is Multidrug resistance-like ATP-binding protein MdlA (579 aa).

The 286-residue stretch at 18-303 (YTIAIFLLIS…FAWMFNIIER (286 aa)) folds into the ABC transmembrane type-1 domain. The next 6 helical transmembrane spans lie at 20–40 (IAIF…KLIG), 53–73 (KAPI…IYIL), 134–154 (GVLT…VMIT), 155–175 (QISW…AIII), 247–267 (IIHL…SYMI), and 281–301 (ILYL…FNII). Positions 338–572 (VKINYFKYSK…LKQWYGKTYL (235 aa)) constitute an ABC transporter domain. Residue 370 to 377 (GPTGSGKS) coordinates ATP.

This sequence belongs to the ABC transporter superfamily. Drug exporter-2 (TC 3.A.1.117) family.

The protein localises to the cell membrane. The enzyme catalyses ATP + H2O + xenobioticSide 1 = ADP + phosphate + xenobioticSide 2.. In Buchnera aphidicola subsp. Baizongia pistaciae (strain Bp), this protein is Multidrug resistance-like ATP-binding protein MdlA (mdlA).